A 426-amino-acid polypeptide reads, in one-letter code: Histidine--tRNA ligase (426 aa).

Belongs to the class-II aminoacyl-tRNA synthetase family.

The protein resides in the cytoplasm. The catalysed reaction is tRNA(His) + L-histidine + ATP = L-histidyl-tRNA(His) + AMP + diphosphate + H(+). This Saccharolobus islandicus (strain M.16.27) (Sulfolobus islandicus) protein is Histidine--tRNA ligase.